Reading from the N-terminus, the 221-residue chain is PKHD-type hydroxylase PMT_0286 (221 aa).

The 95-residue stretch at 80-174 (HIHGVMFSRS…RLVCVGWIQS (95 aa)) folds into the Fe2OG dioxygenase domain. Positions 98, 100, and 155 each coordinate Fe cation. Arg165 provides a ligand contact to 2-oxoglutarate.

It depends on Fe(2+) as a cofactor. L-ascorbate is required as a cofactor.

This Prochlorococcus marinus (strain MIT 9313) protein is PKHD-type hydroxylase PMT_0286.